The sequence spans 231 residues: 2-C-methyl-D-erythritol 4-phosphate cytidylyltransferase (231 aa).

This sequence belongs to the IspD/TarI cytidylyltransferase family. IspD subfamily.

It carries out the reaction 2-C-methyl-D-erythritol 4-phosphate + CTP + H(+) = 4-CDP-2-C-methyl-D-erythritol + diphosphate. Its pathway is isoprenoid biosynthesis; isopentenyl diphosphate biosynthesis via DXP pathway; isopentenyl diphosphate from 1-deoxy-D-xylulose 5-phosphate: step 2/6. Catalyzes the formation of 4-diphosphocytidyl-2-C-methyl-D-erythritol from CTP and 2-C-methyl-D-erythritol 4-phosphate (MEP). This is 2-C-methyl-D-erythritol 4-phosphate cytidylyltransferase from Mycobacterium bovis (strain BCG / Pasteur 1173P2).